The chain runs to 310 residues: MGDNITSIREFLLLGFPVGPRIQMLLFGLFSLFYVFTLLGNGTILGLISLDSRLHAPMYFFLSHLAVVDIAYACNTVPRMLVNLLHPAKPISFAGRMMQTFLFSTFAVTECLLLVVMSYDLYVAICHPLRYLAIMTWRVCITLAVTSWTTGVLLSLIHLVLLLPLPFCRPQKIYHFFCEILAVLKLACADTHINENMVLAGAISGLVGPLSTIVVSYMCILCAILQIQSREVQRKAFRTCFSHLCVIGLVYGTAIIMYVGPRYGNPKEQKKYLLLFHSLFNPMLNPLICSLRNSEVKNTLKRVLGVERAL.

The Extracellular portion of the chain corresponds to Met1–Met24. Residue Asn4 is glycosylated (N-linked (GlcNAc...) asparagine). The chain crosses the membrane as a helical span at residues Leu25–Ile48. Topologically, residues Ser49 to Ala56 are cytoplasmic. The helical transmembrane segment at Pro57–Pro78 threads the bilayer. At Arg79 to Gln99 the chain is on the extracellular side. Residues Thr100–Tyr119 traverse the membrane as a helical segment. At Asp120–Arg138 the chain is on the cytoplasmic side. The chain crosses the membrane as a helical span at residues Val139–Ile157. Over His158 to Asn194 the chain is Extracellular. Residues Glu195 to Met218 form a helical membrane-spanning segment. Over Cys219 to Lys235 the chain is Cytoplasmic. A helical transmembrane segment spans residues Ala236–Tyr258. Residues Val259–Lys271 lie on the Extracellular side of the membrane. A helical membrane pass occupies residues Tyr272–Leu291. Residues Arg292 to Leu310 are Cytoplasmic-facing.

It belongs to the G-protein coupled receptor 1 family.

It is found in the cell membrane. Its function is as follows. Odorant receptor. This chain is Olfactory receptor 2A4 (OR2A4), found in Homo sapiens (Human).